The primary structure comprises 338 residues: Phenylalanine--tRNA ligase alpha subunit (338 aa).

Glutamate 252 is a binding site for Mg(2+).

Belongs to the class-II aminoacyl-tRNA synthetase family. Phe-tRNA synthetase alpha subunit type 1 subfamily. In terms of assembly, tetramer of two alpha and two beta subunits. Mg(2+) serves as cofactor.

Its subcellular location is the cytoplasm. It carries out the reaction tRNA(Phe) + L-phenylalanine + ATP = L-phenylalanyl-tRNA(Phe) + AMP + diphosphate + H(+). The chain is Phenylalanine--tRNA ligase alpha subunit from Pseudomonas fluorescens (strain ATCC BAA-477 / NRRL B-23932 / Pf-5).